Here is a 104-residue protein sequence, read N- to C-terminus: Large ribosomal subunit protein uL24 (104 aa).

The protein belongs to the universal ribosomal protein uL24 family. In terms of assembly, part of the 50S ribosomal subunit.

Its function is as follows. One of two assembly initiator proteins, it binds directly to the 5'-end of the 23S rRNA, where it nucleates assembly of the 50S subunit. One of the proteins that surrounds the polypeptide exit tunnel on the outside of the subunit. This is Large ribosomal subunit protein uL24 from Clostridium botulinum (strain Eklund 17B / Type B).